The primary structure comprises 226 residues: MLLHIPGLFDADELARICEALERADWADGKVTAGYQSAKAKHNLQLPEGHALAKEIGSALIDRLWKTPRFMSAALPHKVFPPLINCYREGGNFGFHIDNALRQPKGSPERVRTDLSSTLFLSDPESYDGGELVIQDTYGVQQVKLAAGDMVLYPGTSLHKVNPVTRGQRYAAFFWTQSLVRDDSQRTLLFEMDNAIQQLTADVPDHPSLLQLTGTYHNLLRRWAEV.

The Fe2OG dioxygenase domain maps to 78–178 (KVFPPLINCY…RYAAFFWTQS (101 aa)). Histidine 96, aspartate 98, and histidine 159 together coordinate Fe cation. 2-oxoglutarate is bound at residue arginine 169.

Requires Fe(2+) as cofactor. L-ascorbate serves as cofactor.

The protein is PKHD-type hydroxylase Pput_0892 of Pseudomonas putida (strain ATCC 700007 / DSM 6899 / JCM 31910 / BCRC 17059 / LMG 24140 / F1).